The chain runs to 245 residues: Probable transcriptional regulatory protein BF2589 (245 aa).

Positions 225–245 are disordered; sequence EDEDVQNVYTNMKPADNEGEE.

The protein belongs to the TACO1 family.

It is found in the cytoplasm. This Bacteroides fragilis (strain ATCC 25285 / DSM 2151 / CCUG 4856 / JCM 11019 / LMG 10263 / NCTC 9343 / Onslow / VPI 2553 / EN-2) protein is Probable transcriptional regulatory protein BF2589.